A 686-amino-acid polypeptide reads, in one-letter code: MASNSHNNYNTPRRQNYDVPKAWEEDSLYENIDFLTQPAVSSDTSEDEEPLLSVARRVEVQGVNPGLKPRGLVRPRQDADNPSSDEGFDWELWKLHLSTRAFSFLEPPRLSSSNTASGLRSSCSDFTILGSSGVNPTSHANLSEEEMYEEIPPLASNPSDERHPRQLSGAVAQGAIRKSPRKLKFKPAKFKGLSSSLLNPFTASDSGRRARRQTPTCQPGFTPIFQDLGEPHYVKACTVFFEGCMAAGKTTLLNFARQTLSDDEALTIPEPMRFWTEVYTNVLSQIVKINKECKPGKTSTTAELVSCQLKFATPLKTQSLFLQRSVKKDSEMQPVGPLDKWVIVDRHQLSALVVFPLVLMRRGMLSFSDFFNLLGMFEAHPGEVIALMSVNVEENFTRLKKRGRVCERHIDRDYIKEIKGSFNAAYCAWLFLQYFSIQTTMQICMGLSSLDEACATEGVCHTTASRIWNNRMLVTLSDIISQFSNDYTVQNVCYNFFSQLSTLKFVVIDLSAFRHDVPGAWGEFYMQVMKNGDIKTRVMDFTAIKALADTAHNTHLRSISFSSSQVFSTMLFLILLCVTGAQAITTPAPPRPATTTPRRGVTSAPLIVPASSSELIVTLDGTFHSVTIDMTEIRQYVRQEIIEALWNASHVFESLETTYNRYKDVYRFTDQSIRVNTRGSCQLVKK.

The segment covering 1–14 (MASNSHNNYNTPRR) has biased composition (polar residues). Disordered regions lie at residues 1–21 (MASN…DVPK) and 64–85 (NPGL…PSSD). An ATP-binding site is contributed by 243 to 250 (GCMAAGKT). Glu270 acts as the Proton acceptor in catalysis. Gln308 serves as a coordination point for substrate. Arg398 provides a ligand contact to ATP. Arg404 provides a ligand contact to substrate.

Belongs to the herpesviridae thymidine kinase family. In terms of assembly, homodimer.

The catalysed reaction is thymidine + ATP = dTMP + ADP + H(+). Catalyzes the transfer of the gamma-phospho group of ATP to thymidine to generate dTMP in the salvage pathway of pyrimidine synthesis. The dTMP serves as a substrate for DNA polymerase during viral DNA replication. Allows the virus to be reactivated and to grow in non-proliferative cells lacking a high concentration of phosphorylated nucleic acid precursors. The protein is Thymidine kinase of Alcelaphine herpesvirus 1 (strain WC11) (AlHV-1).